The sequence spans 560 residues: Membrane protein insertase YidC (560 aa).

The chain crosses the membrane as a helical span at residues 7 to 27 (ILIVALAIVSYVMVLKWNQDY). Positions 43 to 72 (APAIPDTPLGNNASASADVPSANGETSAPL) are disordered. The next 4 membrane-spanning stretches (helical) occupy residues 367–387 (IVGNWGWSIIFLTMLIKGIFF), 437–457 (LGGCLPILVQMPVFLSLYWVL), 468–488 (FMLWITDLSIKDPFFILPIIM), and 515–535 (PIIFTFFFLWFPAGLVLYWVV).

This sequence belongs to the OXA1/ALB3/YidC family. Type 1 subfamily. As to quaternary structure, interacts with the Sec translocase complex via SecD. Specifically interacts with transmembrane segments of nascent integral membrane proteins during membrane integration.

The protein resides in the cell inner membrane. Required for the insertion and/or proper folding and/or complex formation of integral membrane proteins into the membrane. Involved in integration of membrane proteins that insert both dependently and independently of the Sec translocase complex, as well as at least some lipoproteins. Aids folding of multispanning membrane proteins. The chain is Membrane protein insertase YidC from Pseudomonas fluorescens (strain SBW25).